The sequence spans 446 residues: Aspartokinase (446 aa).

In terms of domain architecture, RPE1 insert spans 250–294 (IPLVKSTYMEESALNTKHSTKIDIPEDASGSTYKLPIELALQNRY).

The protein belongs to the aspartokinase family.

It carries out the reaction L-aspartate + ATP = 4-phospho-L-aspartate + ADP. The protein operates within amino-acid biosynthesis; L-lysine biosynthesis via DAP pathway; (S)-tetrahydrodipicolinate from L-aspartate: step 1/4. Its pathway is amino-acid biosynthesis; L-methionine biosynthesis via de novo pathway; L-homoserine from L-aspartate: step 1/3. It participates in amino-acid biosynthesis; L-threonine biosynthesis; L-threonine from L-aspartate: step 1/5. The protein is Aspartokinase (lysC) of Rickettsia prowazekii (strain Madrid E).